The chain runs to 869 residues: Dynamin-3 (869 aa).

Residues 28 to 294 enclose the Dynamin-type G domain; the sequence is LLELPQIAVV…LTNHIRDTLP (267 aa). The interval 38-45 is G1 motif; it reads GGQSAGKS. 38-46 contacts GTP; it reads GGQSAGKSS. The tract at residues 64–66 is G2 motif; sequence VTR. The interval 136-139 is G3 motif; that stretch reads DLPG. Residues 205–208 form a G4 motif region; the sequence is TKLD. 205-211 provides a ligand contact to GTP; sequence TKLDLMD. The residue at position 231 (Tyr-231) is a Phosphotyrosine. The tract at residues 235–238 is G5 motif; that stretch reads VNRS. 236 to 239 lines the GTP pocket; it reads NRSQ. N6-acetyllysine is present on Lys-299. Residues 525–631 form the PH domain; sequence IVIRKGWLTV…WKASLLRAGV (107 aa). Residue Tyr-603 is modified to Phosphotyrosine. Lys-604 bears the N6-acetyllysine mark. In terms of domain architecture, GED spans 659–750; sequence VETIRNLVDS…IIGDINTVTV (92 aa). The tract at residues 752–869 is disordered; it reads TPAPPPVDDS…IRPLESSLLD (118 aa). Ser-769 and Ser-773 each carry phosphoserine. A compositionally biased stretch (low complexity) spans 775–796; that stretch reads TTQRRLTLSAPLPRPASSRGPA. Pro residues-rich tracts occupy residues 797-822 and 832-855; these read PAIP…PPFP and PQVP…PSPT. Ser-853 is modified (phosphoserine).

The protein belongs to the TRAFAC class dynamin-like GTPase superfamily. Dynamin/Fzo/YdjA family. Isoform-specific expression in germ-cell-depleted testis (Sertoli cells), brain (peripheral sensory neurons), lung and heart.

The protein resides in the cytoplasm. It localises to the cytoskeleton. It is found in the cytoplasmic vesicle. The protein localises to the golgi apparatus. The catalysed reaction is GTP + H2O = GDP + phosphate + H(+). Its function is as follows. Microtubule-associated force-producing protein involved in producing microtubule bundles and able to bind and hydrolyze GTP. Most probably involved in vesicular trafficking processes, in particular endocytosis. The protein is Dynamin-3 (Dnm3) of Rattus norvegicus (Rat).